Here is a 143-residue protein sequence, read N- to C-terminus: uncharacterized protein (143 aa).

The signal sequence occupies residues 1 to 16 (MSRNRLFLVAGSLAVA). The helical transmembrane segment at 114 to 134 (GAYVFLGPGFTPGSPSGGSGG) threads the bilayer.

It is found in the membrane. This is an uncharacterized protein from Mycobacterium tuberculosis (strain CDC 1551 / Oshkosh).